A 462-amino-acid polypeptide reads, in one-letter code: L-seryl-tRNA(Sec) selenium transferase (462 aa).

Lys-293 carries the N6-(pyridoxal phosphate)lysine modification.

It belongs to the SelA family. Pyridoxal 5'-phosphate is required as a cofactor.

The protein resides in the cytoplasm. The enzyme catalyses L-seryl-tRNA(Sec) + selenophosphate + H(+) = L-selenocysteinyl-tRNA(Sec) + phosphate. The protein operates within aminoacyl-tRNA biosynthesis; selenocysteinyl-tRNA(Sec) biosynthesis; selenocysteinyl-tRNA(Sec) from L-seryl-tRNA(Sec) (bacterial route): step 1/1. Its function is as follows. Converts seryl-tRNA(Sec) to selenocysteinyl-tRNA(Sec) required for selenoprotein biosynthesis. The sequence is that of L-seryl-tRNA(Sec) selenium transferase from Clostridium botulinum (strain Okra / Type B1).